We begin with the raw amino-acid sequence, 159 residues long: 2-C-methyl-D-erythritol 2,4-cyclodiphosphate synthase (159 aa).

Asp10 and His12 together coordinate a divalent metal cation. 4-CDP-2-C-methyl-D-erythritol 2-phosphate-binding positions include 10–12 (DVH) and 37–38 (HS). His45 is an a divalent metal cation binding site. Residues 59-61 (DIG), 64-68 (FPDTD), 103-109 (AQAPKML), 135-138 (TTTE), Phe142, and Arg145 contribute to the 4-CDP-2-C-methyl-D-erythritol 2-phosphate site.

This sequence belongs to the IspF family. As to quaternary structure, homotrimer. Requires a divalent metal cation as cofactor.

The catalysed reaction is 4-CDP-2-C-methyl-D-erythritol 2-phosphate = 2-C-methyl-D-erythritol 2,4-cyclic diphosphate + CMP. The protein operates within isoprenoid biosynthesis; isopentenyl diphosphate biosynthesis via DXP pathway; isopentenyl diphosphate from 1-deoxy-D-xylulose 5-phosphate: step 4/6. In terms of biological role, involved in the biosynthesis of isopentenyl diphosphate (IPP) and dimethylallyl diphosphate (DMAPP), two major building blocks of isoprenoid compounds. Catalyzes the conversion of 4-diphosphocytidyl-2-C-methyl-D-erythritol 2-phosphate (CDP-ME2P) to 2-C-methyl-D-erythritol 2,4-cyclodiphosphate (ME-CPP) with a corresponding release of cytidine 5-monophosphate (CMP). This chain is 2-C-methyl-D-erythritol 2,4-cyclodiphosphate synthase, found in Francisella tularensis subsp. novicida (strain U112).